A 921-amino-acid chain; its full sequence is MVIGLLKTLVGSRNDRLLKQYRKVIAKVSAFEPSLQSLDDVALATKTAEFKLRLAAGESLDDIAAEAFAVVREASVRVMKMRHFDAQIMGGLALHQGKIAEMGTGEGKTLTATLPVYLNALTGKGVHVVTVNDYLAQRDAEWMSKLYNFLGMKVGVNLSQMDHTTKQAAYAADITYGTNNEFGFDYLRDNMVQDLDQRVQRGLAYAIVDEVDSILIDEARTPLIISGQAEDHTDLYIKINALPSHLERQIGEEKADGTGVEKPGDYWVDEKSQQVYLTERGHDKAEAVLVQLGALNDGDSLYAPQNITLMHHVFAALRAHTLYLRDQHYVVQNGEVIIVDEFTGRLMQGRRWSDGLHQAVEAKEGVQIQNENQTLATITFQNYFRMYGKLAGMTGTADTEAYEFKEIYNLETVVIPPNRISQRKDKQDQIFKSSRERYDAVIKDIEDCYERGQPVLVGTTSIENSELIAQLLDKRKLPHQVLNAKQHAREAEIIAQAGRPKMITIATNMAGRGTDIVLGGNVGKQSSLIDADSSLSDAEKASKIMQLQDEWQSIHDQVLASGGLHIIGTERHESRRIDNQLRGRSGRQGDPGSSRFYLSLDDPLLRIFAGDRLRAVMERLKMPDGEPIEAGIVTRSIESAQRKVEGRNFDIRKQLLEYDDVANDQRKETYRLRNEVLESSDIGDLIANLREDVLRAVCSVYVPLESMEEQWDLAGLENVLASEWGLTIVLKNWVEGADSVDDSEIVDRVLQLAKESYDAKVDLSGRESFASFERSVLLYSLDSHWREHLAALDYLRQGIHLRGYAQKDPKQEYRREAFELYGELLNVIKNDVVKSIMTVQIRSASELDQASESMNDDLAKLADVQYQHADPDMEVAGSTGDRGAAIDIQPAPLCAGPKVGRNDPCPCGSGKKYKNCCGALT.

ATP is bound by residues Gln87, 105–109, and Asp515; that span reads GEGKT. The disordered stretch occupies residues 575–594; that stretch reads RRIDNQLRGRSGRQGDPGSS. Cys905, Cys907, Cys916, and Cys917 together coordinate Zn(2+).

The protein belongs to the SecA family. As to quaternary structure, monomer and homodimer. Part of the essential Sec protein translocation apparatus which comprises SecA, SecYEG and auxiliary proteins SecDF-YajC and YidC. The cofactor is Zn(2+).

It is found in the cell inner membrane. The protein localises to the cytoplasm. It carries out the reaction ATP + H2O + cellular proteinSide 1 = ADP + phosphate + cellular proteinSide 2.. Functionally, part of the Sec protein translocase complex. Interacts with the SecYEG preprotein conducting channel. Has a central role in coupling the hydrolysis of ATP to the transfer of proteins into and across the cell membrane, serving both as a receptor for the preprotein-SecB complex and as an ATP-driven molecular motor driving the stepwise translocation of polypeptide chains across the membrane. The polypeptide is Protein translocase subunit SecA (Polynucleobacter necessarius subsp. necessarius (strain STIR1)).